We begin with the raw amino-acid sequence, 262 residues long: Nurim (262 aa).

The Nuclear segment spans residues 1–4 (MAPA). The helical transmembrane segment at 5–28 (LLLIPAALASFILAFGTGVEFVRF) threads the bilayer. Topologically, residues 29-58 (TSLRPLLGGIPESGGPDARQGWLAALQDRS) are perinuclear space. Residues 59–80 (ILAPLAWDLGLLLLFVGQHSLM) traverse the membrane as a helical segment. The Nuclear segment spans residues 81 to 97 (AAERVKAWTSRYFGVLQ). A helical transmembrane segment spans residues 98 to 114 (RSLYVACTALALQLVMR). Residues 115 to 133 (YWEPIPKGPVLWEARAEPW) lie on the Perinuclear space side of the membrane. A helical transmembrane segment spans residues 134 to 164 (ATWVPLLCFVLHVISWLLIFSILLVFDYAEL). Topologically, residues 165-191 (MGLKQVYYHVLGLGEPLALKSPRALRL) are nuclear. Residues 192–210 (FSHLRHPVCVELLTVLWVV) traverse the membrane as a helical segment. The Perinuclear space portion of the chain corresponds to 211 to 216 (PTLGTD). A helical transmembrane segment spans residues 217–234 (RLLLAFLLTLYLGLAHGL). The Nuclear segment spans residues 235-262 (DQQDLRYLRAQLQRKLHLLSRPQDGEAE).

This sequence belongs to the nurim family.

The protein resides in the nucleus inner membrane. The polypeptide is Nurim (NRM) (Homo sapiens (Human)).